The following is a 106-amino-acid chain: Large ribosomal subunit protein bL21 (106 aa).

The protein belongs to the bacterial ribosomal protein bL21 family. As to quaternary structure, part of the 50S ribosomal subunit. Contacts protein L20.

Its function is as follows. This protein binds to 23S rRNA in the presence of protein L20. This Streptomyces griseus subsp. griseus (strain JCM 4626 / CBS 651.72 / NBRC 13350 / KCC S-0626 / ISP 5235) protein is Large ribosomal subunit protein bL21.